The chain runs to 78 residues: Large ribosomal subunit protein bL28 (78 aa).

The protein belongs to the bacterial ribosomal protein bL28 family.

This Salmonella choleraesuis (strain SC-B67) protein is Large ribosomal subunit protein bL28.